A 377-amino-acid chain; its full sequence is Trans-enoyl reductase FMN2 (377 aa).

Residues 7-370 (NASGGYCLNS…DGVIRGKKLV (364 aa)) form the Enoyl reductase (ER) domain. Residues 143–173 (LSDMTGNGRSNGYTNGHTNGHTNGHSKGEEE) form a disordered region. Residues 144-155 (SDMTGNGRSNGY) show a composition bias toward polar residues. The span at 156–167 (TNGHTNGHTNGH) shows a compositional bias: low complexity. Residues 186–189 (ASAS), 209–212 (SPAN), Y227, and 274–275 (LD) contribute to the NADP(+) site.

The protein belongs to the zinc-containing alcohol dehydrogenase family.

The protein operates within secondary metabolite biosynthesis. Functionally, trans-enoyl reductase; part of the gene cluster that mediates the biosynthesis of fusamarins, isocoumarin derivatives that show moderate cytotoxicity with IC(50) values between 1 and 50 uM. The polyketide synthase FMN1 probably synthesizes two different polyketides, a tetra- and a pentaketide, containinga varying number of double bonds depending on the selective actions of the trans-enoyl reductase FMN2. Chain fusion will presumably be mediated by the KS domain before finally offloading is catalyzed by the alpha/beta hydrolase fold enzyme FMN3. The polypeptide is Trans-enoyl reductase FMN2 (Fusarium mangiferae (Mango malformation disease fungus)).